Consider the following 362-residue polypeptide: uncharacterized protein (362 aa).

7 helical membrane passes run 32–52, 75–95, 106–126, 148–168, 176–196, 287–307, and 329–349; these read GAGW…VGAV, FVDA…ADGV, VVML…DLSV, AAVG…GVGA, GVGT…VVVV, VFAL…PVAM, and VLVA…CGMF.

Belongs to the peptidase S58 family.

Its subcellular location is the cell membrane. Its function is as follows. Aminopeptidase. This is an uncharacterized protein from Mycobacterium leprae (strain TN).